The chain runs to 437 residues: Adenylosuccinate synthetase (437 aa).

Residues 12–18 (GDEGKGK) and 40–42 (GHT) each bind GTP. The active-site Proton acceptor is Asp-13. Mg(2+) is bound by residues Asp-13 and Gly-40. IMP contacts are provided by residues 13 to 16 (DEGK), 38 to 41 (NAGH), Thr-128, Arg-142, Gln-223, Thr-238, and Arg-302. His-41 serves as the catalytic Proton donor. Substrate is bound at residue 298–304 (TTTGRRR). Residues Arg-304, 330–332 (KLD), and 412–414 (SLG) each bind GTP.

The protein belongs to the adenylosuccinate synthetase family. Homodimer. The cofactor is Mg(2+).

It localises to the cytoplasm. The enzyme catalyses IMP + L-aspartate + GTP = N(6)-(1,2-dicarboxyethyl)-AMP + GDP + phosphate + 2 H(+). The protein operates within purine metabolism; AMP biosynthesis via de novo pathway; AMP from IMP: step 1/2. Its function is as follows. Plays an important role in the de novo pathway of purine nucleotide biosynthesis. Catalyzes the first committed step in the biosynthesis of AMP from IMP. This chain is Adenylosuccinate synthetase, found in Prochlorococcus marinus (strain MIT 9313).